Reading from the N-terminus, the 97-residue chain is Co-chaperonin GroES (97 aa).

The protein belongs to the GroES chaperonin family. In terms of assembly, heptamer of 7 subunits arranged in a ring. Interacts with the chaperonin GroEL.

The protein localises to the cytoplasm. Its function is as follows. Together with the chaperonin GroEL, plays an essential role in assisting protein folding. The GroEL-GroES system forms a nano-cage that allows encapsulation of the non-native substrate proteins and provides a physical environment optimized to promote and accelerate protein folding. GroES binds to the apical surface of the GroEL ring, thereby capping the opening of the GroEL channel. This chain is Co-chaperonin GroES, found in Buchnera aphidicola subsp. Thelaxes suberi.